A 310-amino-acid polypeptide reads, in one-letter code: tRNA dimethylallyltransferase (310 aa).

19 to 26 (GPTGTGKS) lines the ATP pocket. Position 21 to 26 (21 to 26 (TGTGKS)) interacts with substrate.

It belongs to the IPP transferase family. As to quaternary structure, monomer. Mg(2+) is required as a cofactor.

The enzyme catalyses adenosine(37) in tRNA + dimethylallyl diphosphate = N(6)-dimethylallyladenosine(37) in tRNA + diphosphate. Functionally, catalyzes the transfer of a dimethylallyl group onto the adenine at position 37 in tRNAs that read codons beginning with uridine, leading to the formation of N6-(dimethylallyl)adenosine (i(6)A). The polypeptide is tRNA dimethylallyltransferase (Saccharopolyspora erythraea (strain ATCC 11635 / DSM 40517 / JCM 4748 / NBRC 13426 / NCIMB 8594 / NRRL 2338)).